The primary structure comprises 92 residues: N(2)-fixation sustaining protein CowN (92 aa).

This sequence belongs to the CowN family.

Its function is as follows. Is required to sustain N(2)-dependent growth in the presence of low levels of carbon monoxide (CO). Probably acts by protecting the N(2) fixation ability of the nitrogenase complex, which is inactivated in the presence of CO. The chain is N(2)-fixation sustaining protein CowN from Rhodobacter capsulatus (strain ATCC BAA-309 / NBRC 16581 / SB1003).